We begin with the raw amino-acid sequence, 341 residues long: UDP-3-O-acylglucosamine N-acyltransferase (341 aa).

H255 acts as the Proton acceptor in catalysis.

This sequence belongs to the transferase hexapeptide repeat family. LpxD subfamily. In terms of assembly, homotrimer.

The catalysed reaction is a UDP-3-O-[(3R)-3-hydroxyacyl]-alpha-D-glucosamine + a (3R)-hydroxyacyl-[ACP] = a UDP-2-N,3-O-bis[(3R)-3-hydroxyacyl]-alpha-D-glucosamine + holo-[ACP] + H(+). The protein operates within bacterial outer membrane biogenesis; LPS lipid A biosynthesis. In terms of biological role, catalyzes the N-acylation of UDP-3-O-acylglucosamine using 3-hydroxyacyl-ACP as the acyl donor. Is involved in the biosynthesis of lipid A, a phosphorylated glycolipid that anchors the lipopolysaccharide to the outer membrane of the cell. This chain is UDP-3-O-acylglucosamine N-acyltransferase, found in Granulibacter bethesdensis (strain ATCC BAA-1260 / CGDNIH1).